The chain runs to 681 residues: PTS system glucose-specific EIICBA component (681 aa).

One can recognise a PTS EIIC type-1 domain in the interval 3-414; the sequence is KKLFGQLQRI…LKYKTPGRED (412 aa). A run of 10 helical transmembrane segments spans residues 16 to 36, 73 to 93, 126 to 146, 170 to 190, 199 to 219, 273 to 293, 303 to 323, 328 to 348, 355 to 375, and 383 to 403; these read LMLPVAILPAAGLLLAIGTAI, MIFALGVAIGLAGGDGVAAIA, ILGIPTLQTGVFGGIIIGALA, FVPIMMATTSFILAFPMALIW, AFSTGLLDSNTGVAVFLFGFI, FMQGEFPVMMFGLPAAALAIY, VVAGLMGSAALTSFLTGITEP, FLFVAPLLFFIHAVLDGLSFL, VHLGYTFSGGFIDYVLLGVLP, and VIPVGLVYAVIYYFVFRFLIV. The 82-residue stretch at 425–506 folds into the PTS EIIB type-1 domain; that stretch reads TELPYAVLEA…QQIMNGQVVE (82 aa). Cys447 serves as the catalytic Phosphocysteine intermediate; for EIIB activity. A PTS EIIA type-1 domain is found at 551-655; it reads DQVFSEKMMG…SDITPIIVTQ (105 aa). His603 serves as the catalytic Tele-phosphohistidine intermediate; for EIIA activity.

The protein resides in the cell membrane. It catalyses the reaction N(pros)-phospho-L-histidyl-[protein] + D-glucose(out) = D-glucose 6-phosphate(in) + L-histidyl-[protein]. The phosphoenolpyruvate-dependent sugar phosphotransferase system (sugar PTS), a major carbohydrate active transport system, catalyzes the phosphorylation of incoming sugar substrates concomitantly with their translocation across the cell membrane. This system is involved in glucose transport. This Staphylococcus aureus (strain JH9) protein is PTS system glucose-specific EIICBA component (ptsG).